A 157-amino-acid polypeptide reads, in one-letter code: uncharacterized protein (157 aa).

The region spanning 9–146 (LLINYKTLDE…GDFYVWHPET (138 aa)) is the N-acetyltransferase domain.

This is an uncharacterized protein from Bacillus anthracis (strain CDC 684 / NRRL 3495).